The chain runs to 338 residues: MKKIITSFPNLLLSILLCFVLSSCSSTGVKMSDSSPWKTIQFQDQANALDVDFIDNNNGFLVGSNRLIMESNDGGETWEKRNLDLPSEENFRLIDIDFKGQEGWLIGQPSLVMHTLDAGKNWTRLSLGNKLPGQPYLITTVDDGVAELATTAGAIYQTSDSGESWNAKVLDASGSGGVRDLRRTDKGDYVSVSSLGNFFSTLENDSNSWIAHQRASSKRVQSIGFNPEGSLWMLSRGAEIRFNEDTNDLENWSKPIIPILNGYNYLDMGWDPNGDIWAGGGNGTLIVSKDQGKTWNKYPIAAELPTNYIKIVFLDKEALDNQKGFVLGERGYILKWNS.

A signal peptide spans 1–23 (MKKIITSFPNLLLSILLCFVLSS). A lipid anchor (N-palmitoyl cysteine) is attached at Cys24. Residue Cys24 is the site of S-diacylglycerol cysteine attachment.

This sequence belongs to the Ycf48 family. In terms of assembly, part of early PSII assembly complexes which includes D1 (psbA) and PsbI; not found in mature PSII. Binds to the lumenal side of PSII complexes. Interacts with YidC.

It localises to the cellular thylakoid membrane. Functionally, a factor required for optimal assembly of photosystem II (PSII), acting in the early stages of PSII assembly. Also plays a role in replacement of photodamaged D1 (psbA). Assists YidC in synthesis of chlorophyll-binding proteins. This Prochlorococcus marinus (strain MIT 9312) protein is Photosystem II assembly lipoprotein Ycf48.